Here is a 281-residue protein sequence, read N- to C-terminus: Pantothenate synthetase (281 aa).

Position 30–37 (30–37) interacts with ATP; it reads MGYLHEGH. His37 functions as the Proton donor in the catalytic mechanism. Gln61 serves as a coordination point for (R)-pantoate. Gln61 lines the beta-alanine pocket. ATP is bound at residue 147 to 150; it reads GQKD. Gln153 serves as a coordination point for (R)-pantoate. ATP contacts are provided by residues Val176 and 184–187; that span reads MSSR.

Belongs to the pantothenate synthetase family. As to quaternary structure, homodimer.

It localises to the cytoplasm. It catalyses the reaction (R)-pantoate + beta-alanine + ATP = (R)-pantothenate + AMP + diphosphate + H(+). It participates in cofactor biosynthesis; (R)-pantothenate biosynthesis; (R)-pantothenate from (R)-pantoate and beta-alanine: step 1/1. Its function is as follows. Catalyzes the condensation of pantoate with beta-alanine in an ATP-dependent reaction via a pantoyl-adenylate intermediate. The protein is Pantothenate synthetase of Acetivibrio thermocellus (strain ATCC 27405 / DSM 1237 / JCM 9322 / NBRC 103400 / NCIMB 10682 / NRRL B-4536 / VPI 7372) (Clostridium thermocellum).